A 213-amino-acid chain; its full sequence is Large ribosomal subunit protein uL3 (213 aa).

A disordered region spans residues 124-151 (KRHGQSRGPMAHGSRYHRRPGSMGSIAP).

This sequence belongs to the universal ribosomal protein uL3 family. Part of the 50S ribosomal subunit. Forms a cluster with proteins L14 and L19.

Its function is as follows. One of the primary rRNA binding proteins, it binds directly near the 3'-end of the 23S rRNA, where it nucleates assembly of the 50S subunit. The protein is Large ribosomal subunit protein uL3 of Geobacillus kaustophilus (strain HTA426).